Consider the following 272-residue polypeptide: NH(3)-dependent NAD(+) synthetase (272 aa).

45–52 lines the ATP pocket; sequence GISGGQDS. Asp-51 lines the Mg(2+) pocket. Arg-138 provides a ligand contact to deamido-NAD(+). Thr-158 provides a ligand contact to ATP. Glu-163 serves as a coordination point for Mg(2+). The deamido-NAD(+) site is built by Lys-171 and Asp-178. The ATP site is built by Lys-187 and Thr-209. 258 to 259 serves as a coordination point for deamido-NAD(+); the sequence is HK.

The protein belongs to the NAD synthetase family. In terms of assembly, homodimer.

The catalysed reaction is deamido-NAD(+) + NH4(+) + ATP = AMP + diphosphate + NAD(+) + H(+). The protein operates within cofactor biosynthesis; NAD(+) biosynthesis; NAD(+) from deamido-NAD(+) (ammonia route): step 1/1. Functionally, catalyzes the ATP-dependent amidation of deamido-NAD to form NAD. Uses ammonia as a nitrogen source. The sequence is that of NH(3)-dependent NAD(+) synthetase from Bacillus licheniformis (strain ATCC 14580 / DSM 13 / JCM 2505 / CCUG 7422 / NBRC 12200 / NCIMB 9375 / NCTC 10341 / NRRL NRS-1264 / Gibson 46).